Reading from the N-terminus, the 205-residue chain is MNTVLSTVLFAIGAYLIGSISFAVVVSKCFRLADPRSYGSKNPGATNVLRSGNKKAAILTLLGDGAKGFVAVWLVKHFGPDYGVQESGVALVAIAVFLGHLWPIFFRFVGGKGVATALGILLALNGWLGLATLITWLVIAYAFRYSSFAALIAAIFAPFYYALMFGPDAILLAVVAMSVLLIYRHGKNIGNLLAGKESRIGSKKK.

The next 5 helical transmembrane spans lie at 6 to 26, 55 to 75, 89 to 109, 120 to 140, and 162 to 182; these read STVL…AVVV, KAAI…VWLV, VALV…FRFV, ILLA…LVIA, and ALMF…VLLI.

The protein belongs to the PlsY family. Probably interacts with PlsX.

It localises to the cell inner membrane. It carries out the reaction an acyl phosphate + sn-glycerol 3-phosphate = a 1-acyl-sn-glycero-3-phosphate + phosphate. The protein operates within lipid metabolism; phospholipid metabolism. In terms of biological role, catalyzes the transfer of an acyl group from acyl-phosphate (acyl-PO(4)) to glycerol-3-phosphate (G3P) to form lysophosphatidic acid (LPA). This enzyme utilizes acyl-phosphate as fatty acyl donor, but not acyl-CoA or acyl-ACP. The chain is Glycerol-3-phosphate acyltransferase from Herminiimonas arsenicoxydans.